Consider the following 250-residue polypeptide: Proteasome subunit alpha type-7-like (250 aa).

An O-linked (GlcNAc) serine glycan is attached at serine 132.

The protein belongs to the peptidase T1A family. In terms of assembly, the 26S proteasome consists of a 20S proteasome core and two 19S regulatory subunits. The 20S proteasome core is a barrel-shaped complex made of 28 subunits that are arranged in four stacked rings. The two outer rings are each formed by seven alpha subunits, and the two inner rings are formed by seven beta subunits. The proteolytic activity is exerted by three beta-subunits PSMB5, PSMB6 and PSMB7. PSMA7 interacts directly with the PSMG1-PSMG2 heterodimer which promotes 20S proteasome assembly. Interacts with HIF1A. Interacts with RAB7A. Interacts with PRKN. Interacts with ABL1 and ABL2. Interacts with EMAP2. Interacts with MAVS.

The protein resides in the cytoplasm. It is found in the nucleus. Functionally, component of the 20S core proteasome complex involved in the proteolytic degradation of most intracellular proteins. This complex plays numerous essential roles within the cell by associating with different regulatory particles. Associated with two 19S regulatory particles, forms the 26S proteasome and thus participates in the ATP-dependent degradation of ubiquitinated proteins. The 26S proteasome plays a key role in the maintenance of protein homeostasis by removing misfolded or damaged proteins that could impair cellular functions, and by removing proteins whose functions are no longer required. Associated with the PA200 or PA28, the 20S proteasome mediates ubiquitin-independent protein degradation. This type of proteolysis is required in several pathways including spermatogenesis (20S-PA200 complex) or generation of a subset of MHC class I-presented antigenic peptides (20S-PA28 complex). Inhibits the transactivation function of HIF-1A under both normoxic and hypoxia-mimicking conditions. The interaction with EMAP2 increases the proteasome-mediated HIF-1A degradation under the hypoxic conditions. Plays a role in hepatitis C virus internal ribosome entry site-mediated translation. Mediates nuclear translocation of the androgen receptor (AR) and thereby enhances androgen-mediated transactivation. Promotes MAVS degradation and thereby negatively regulates MAVS-mediated innate immune response. This Macaca fascicularis (Crab-eating macaque) protein is Proteasome subunit alpha type-7-like (PSMA7L).